Reading from the N-terminus, the 624-residue chain is (-)-beta-phellandrene synthase 3, chloroplastic (624 aa).

The N-terminal 48 residues, 1–48 (MAIVSSVPLASKSCLHKSLISSIHKLKPFCRTIPTLGMSRPGKYVMPS), are a transit peptide targeting the chloroplast. Mg(2+) is bound by residues D375, D379, and D527. Positions 375–379 (DDMYD) match the DDXXD motif motif.

Belongs to the terpene synthase family. Tpsd subfamily. Requires Mg(2+) as cofactor. Mn(2+) is required as a cofactor.

Its subcellular location is the plastid. It is found in the chloroplast. The catalysed reaction is (2E)-geranyl diphosphate = (-)-beta-phellandrene + diphosphate. Its pathway is terpene metabolism; oleoresin biosynthesis. Functionally, terpene synthase (TPS) involved in the biosynthesis of monoterpene natural products included in conifer oleoresin secretions and volatile emissions; these compounds contribute to biotic and abiotic stress defense against herbivores and pathogens. Catalyzes the conversion of (2E)-geranyl diphosphate (GPP) to (-)-beta-phellandrene. The sequence is that of (-)-beta-phellandrene synthase 3, chloroplastic from Picea sitchensis (Sitka spruce).